The sequence spans 39 residues: Photosystem II reaction center protein Psb30 (39 aa).

A helical transmembrane segment spans residues 12-32 (IFQLTFVALIMLAGPFVIFLL).

This sequence belongs to the Psb30/Ycf12 family. As to quaternary structure, PSII is composed of 1 copy each of membrane proteins PsbA, PsbB, PsbC, PsbD, PsbE, PsbF, PsbH, PsbI, PsbJ, PsbK, PsbL, PsbM, PsbT, PsbX, PsbY, PsbZ, Psb30/Ycf12, peripheral proteins PsbO, CyanoQ (PsbQ), PsbU, PsbV and a large number of cofactors. It forms dimeric complexes.

The protein localises to the cellular thylakoid membrane. In terms of biological role, a core subunit of photosystem II (PSII), probably helps stabilize the reaction center. The chain is Photosystem II reaction center protein Psb30 from Microcystis aeruginosa (strain NIES-843 / IAM M-2473).